We begin with the raw amino-acid sequence, 287 residues long: Energy-coupling factor transporter ATP-binding protein EcfA1 (287 aa).

In terms of domain architecture, ABC transporter spans 6–248; that stretch reads IVAEGVSYAY…ADRIRALRLD (243 aa). Residue 47–54 coordinates ATP; it reads GMNGSGKS.

It belongs to the ABC transporter superfamily. Energy-coupling factor EcfA family. Forms a stable energy-coupling factor (ECF) transporter complex composed of 2 membrane-embedded substrate-binding proteins (S component), 2 ATP-binding proteins (A component) and 2 transmembrane proteins (T component).

Its subcellular location is the cell membrane. Its function is as follows. ATP-binding (A) component of a common energy-coupling factor (ECF) ABC-transporter complex. Unlike classic ABC transporters this ECF transporter provides the energy necessary to transport a number of different substrates. The polypeptide is Energy-coupling factor transporter ATP-binding protein EcfA1 (Symbiobacterium thermophilum (strain DSM 24528 / JCM 14929 / IAM 14863 / T)).